Consider the following 273-residue polypeptide: 4-hydroxy-tetrahydrodipicolinate reductase (273 aa).

Residues 12–17 (GAGGRM) and Glu-38 contribute to the NAD(+) site. Residue Arg-39 coordinates NADP(+). Residues 102 to 104 (GTT) and 126 to 129 (AANF) each bind NAD(+). His-159 serves as the catalytic Proton donor/acceptor. Residue His-160 coordinates (S)-2,3,4,5-tetrahydrodipicolinate. Lys-163 serves as the catalytic Proton donor. 169-170 (GT) contributes to the (S)-2,3,4,5-tetrahydrodipicolinate binding site.

Belongs to the DapB family. In terms of assembly, homotetramer.

The protein resides in the cytoplasm. The catalysed reaction is (S)-2,3,4,5-tetrahydrodipicolinate + NAD(+) + H2O = (2S,4S)-4-hydroxy-2,3,4,5-tetrahydrodipicolinate + NADH + H(+). It carries out the reaction (S)-2,3,4,5-tetrahydrodipicolinate + NADP(+) + H2O = (2S,4S)-4-hydroxy-2,3,4,5-tetrahydrodipicolinate + NADPH + H(+). Its pathway is amino-acid biosynthesis; L-lysine biosynthesis via DAP pathway; (S)-tetrahydrodipicolinate from L-aspartate: step 4/4. Functionally, catalyzes the conversion of 4-hydroxy-tetrahydrodipicolinate (HTPA) to tetrahydrodipicolinate. In Klebsiella pneumoniae (strain 342), this protein is 4-hydroxy-tetrahydrodipicolinate reductase.